Here is a 512-residue protein sequence, read N- to C-terminus: PTS system mannitol-specific EIICB component (512 aa).

At 1-28 (MSQTEEKKGIGRRVQAFGSFLSSMIMPN) the chain is on the cytoplasmic side. The region spanning 17 to 349 (FGSFLSSMIM…MKFTREPKQD (333 aa)) is the PTS EIIC type-2 domain. The helical transmembrane segment at 29-50 (IGAFIAWGFIAAIFIDNGWLPN) threads the bilayer. Residues 51 to 54 (KDLA) are Extracellular-facing. Residues 55–75 (TLAGPMITYLIPLLIAFSGGR) form a helical membrane-spanning segment. The Cytoplasmic segment spans residues 76–139 (LIYDLRGGII…QGFEMLFNNF (64 aa)). The chain crosses the membrane as a helical span at residues 140–161 (SAGILGFIMTIAGFKILAPLMK). Residues 162-170 (FIMHILSVA) lie on the Extracellular side of the membrane. Residues 171–191 (VEALVHAHLLPLVSILVEPAK) form a helical membrane-spanning segment. Over 192-278 (IVFLNNAINH…VLMRPLLFIA (87 aa)) the chain is Cytoplasmic. A helical transmembrane segment spans residues 279 to 298 (VILGGMTGVATYQATGFGFK). Residues 299–318 (SPASPGSFIVYCLNAPRGEF) lie on the Extracellular side of the membrane. A helical membrane pass occupies residues 319 to 340 (LHMLLGVFLAALVSFVVAALIM). Residues 341–512 (KFTREPKQDL…LNNLKKDDQA (172 aa)) are Cytoplasmic-facing. The interval 355 to 402 (AQMENTKGKKSSVASKLVSSDKNVNTEENASGNVSETSSSDDDPEALL) is disordered. Residues 365 to 376 (SSVASKLVSSDK) are compositionally biased toward low complexity. Residues 380 to 392 (TEENASGNVSETS) show a composition bias toward polar residues. In terms of domain architecture, PTS EIIB type-2 spans 419 to 512 (NHVIFACDAG…LNNLKKDDQA (94 aa)). Catalysis depends on cysteine 425, which acts as the Phosphocysteine intermediate; for EIIB activity. Cysteine 425 carries the phosphocysteine; by EIIA modification.

Homodimer.

It is found in the cell membrane. The catalysed reaction is D-mannitol(out) + N(pros)-phospho-L-histidyl-[protein] = D-mannitol 1-phosphate(in) + L-histidyl-[protein]. In terms of biological role, the phosphoenolpyruvate-dependent sugar phosphotransferase system (sugar PTS), a major carbohydrate active transport system, catalyzes the phosphorylation of incoming sugar substrates concomitantly with their translocation across the cell membrane. The enzyme II CmtAB PTS system is involved in D-mannitol transport. The sequence is that of PTS system mannitol-specific EIICB component (mtlA) from Staphylococcus aureus (strain COL).